We begin with the raw amino-acid sequence, 689 residues long: DNA ligase (689 aa).

Residues 40 to 44, 89 to 90, and Glu121 contribute to the NAD(+) site; these read DAEYD and SL. Catalysis depends on Lys123, which acts as the N6-AMP-lysine intermediate. 4 residues coordinate NAD(+): Arg144, Glu179, Lys295, and Lys319. Zn(2+) is bound by residues Cys413, Cys416, Cys431, and Cys437. A BRCT domain is found at 610-689; that stretch reads KEHSSLTGKI…EEWLTIVNNV (80 aa).

Belongs to the NAD-dependent DNA ligase family. LigA subfamily. It depends on Mg(2+) as a cofactor. The cofactor is Mn(2+).

The enzyme catalyses NAD(+) + (deoxyribonucleotide)n-3'-hydroxyl + 5'-phospho-(deoxyribonucleotide)m = (deoxyribonucleotide)n+m + AMP + beta-nicotinamide D-nucleotide.. Its function is as follows. DNA ligase that catalyzes the formation of phosphodiester linkages between 5'-phosphoryl and 3'-hydroxyl groups in double-stranded DNA using NAD as a coenzyme and as the energy source for the reaction. It is essential for DNA replication and repair of damaged DNA. The protein is DNA ligase of Rickettsia canadensis (strain McKiel).